Reading from the N-terminus, the 513-residue chain is Xylose import ATP-binding protein XylG (513 aa).

ABC transporter domains lie at 5–242 and 259–505; these read LEMK…VGRE and LRIE…LRSE. An ATP-binding site is contributed by 37–44; it reads GENGSGKS.

Belongs to the ABC transporter superfamily. Xylose importer (TC 3.A.1.2.4) family. The complex is composed of two ATP-binding proteins (XylG), two transmembrane proteins (XylH) and a solute-binding protein (XylF).

It is found in the cell inner membrane. It catalyses the reaction D-xylose(out) + ATP + H2O = D-xylose(in) + ADP + phosphate + H(+). Its function is as follows. Part of the ABC transporter complex XylFGH involved in xylose import. Responsible for energy coupling to the transport system. This Shigella boydii serotype 4 (strain Sb227) protein is Xylose import ATP-binding protein XylG.